The sequence spans 215 residues: Pyridoxine/pyridoxamine 5'-phosphate oxidase (215 aa).

Substrate is bound by residues 9-12 (RRDY) and K69. FMN contacts are provided by residues 64–69 (RVLLLK), 79–80 (FT), K86, and Q108. Residues Y126, R130, and S134 each contribute to the substrate site. FMN is bound by residues 143-144 (QS) and W188. A substrate-binding site is contributed by 194–196 (RLH). R198 provides a ligand contact to FMN.

The protein belongs to the pyridoxamine 5'-phosphate oxidase family. In terms of assembly, homodimer. FMN is required as a cofactor.

The enzyme catalyses pyridoxamine 5'-phosphate + O2 + H2O = pyridoxal 5'-phosphate + H2O2 + NH4(+). The catalysed reaction is pyridoxine 5'-phosphate + O2 = pyridoxal 5'-phosphate + H2O2. It functions in the pathway cofactor metabolism; pyridoxal 5'-phosphate salvage; pyridoxal 5'-phosphate from pyridoxamine 5'-phosphate: step 1/1. It participates in cofactor metabolism; pyridoxal 5'-phosphate salvage; pyridoxal 5'-phosphate from pyridoxine 5'-phosphate: step 1/1. Its function is as follows. Catalyzes the oxidation of either pyridoxine 5'-phosphate (PNP) or pyridoxamine 5'-phosphate (PMP) into pyridoxal 5'-phosphate (PLP). This Pseudomonas syringae pv. tomato (strain ATCC BAA-871 / DC3000) protein is Pyridoxine/pyridoxamine 5'-phosphate oxidase.